The following is a 78-amino-acid chain: Small ribosomal subunit protein bS20 (78 aa).

Belongs to the bacterial ribosomal protein bS20 family.

Functionally, binds directly to 16S ribosomal RNA. The chain is Small ribosomal subunit protein bS20 from Streptococcus pneumoniae serotype 19F (strain G54).